Here is an 81-residue protein sequence, read N- to C-terminus: Large ribosomal subunit protein bL31 (81 aa).

The protein belongs to the bacterial ribosomal protein bL31 family. Type A subfamily. Part of the 50S ribosomal subunit.

Its function is as follows. Binds the 23S rRNA. The sequence is that of Large ribosomal subunit protein bL31 (rpmE) from Fusobacterium nucleatum subsp. nucleatum (strain ATCC 25586 / DSM 15643 / BCRC 10681 / CIP 101130 / JCM 8532 / KCTC 2640 / LMG 13131 / VPI 4355).